Reading from the N-terminus, the 477-residue chain is Tripartite motif-containing protein 72 (477 aa).

Zn(2+) contacts are provided by leucine 14, glutamine 17, proline 29, cysteine 31, threonine 34, glutamine 37, threonine 53, proline 56, glycine 86, leucine 89, valine 97, glutamate 100, leucine 105, glycine 108, glycine 114, and lysine 117. An RING-type zinc finger spans residues 16 to 59 (CQLCLELFRAPVTPECGHTFCQGCLTGVPKNQDQNGSTPCPTCQ). The B box-type zinc finger occupies 83–124 (VPQGHCLEHMDPLSVYCEQDKELICGVCASLGKHKGHNIITA). Residues 135–232 (LPQQQVILQE…QMEGVLKDVE (98 aa)) are a coiled coil. A B30.2/SPRY domain is found at 272-476 (DEFKFQVWRK…LKIFYPPAEQ (205 aa)).

This sequence belongs to the TRIM/RBCC family. Homodimer. Homooligomer; disulfide-linked. Oligomerizes on the phospholipid membrane. Disulfide bond formation at Cys-244 occurs in case of membrane damage that cause the entry of the oxidized milieu of the extracellular space, resulting in homooligomerization.

The protein localises to the cell membrane. It localises to the sarcolemma. Its subcellular location is the cytoplasmic vesicle membrane. It catalyses the reaction S-ubiquitinyl-[E2 ubiquitin-conjugating enzyme]-L-cysteine + [acceptor protein]-L-lysine = [E2 ubiquitin-conjugating enzyme]-L-cysteine + N(6)-ubiquitinyl-[acceptor protein]-L-lysine.. It functions in the pathway protein modification; protein ubiquitination. Specifically binds phosphatidylserine. The binding to phospholipids enhances ubiquitination activity. Muscle-specific E3 ubiquitin-protein ligase that plays a central role in cell membrane repair by nucleating the assembly of the repair machinery at injury sites. Acts as a sensor of oxidation: upon membrane damage, entry of extracellular oxidative environment results in disulfide bond formation and homooligomerization at the injury site. This oligomerization acts as a nucleation site for recruitment of TRIM72-containing vesicles to the injury site, leading to membrane patch formation. Probably acts upstream of the Ca(2+)-dependent membrane resealing process. Required for transport of DYSF to sites of cell injury during repair patch formation. Regulates membrane budding and exocytosis. May be involved in the regulation of the mobility of KCNB1-containing endocytic vesicles. This Xenopus laevis (African clawed frog) protein is Tripartite motif-containing protein 72 (trim72).